The primary structure comprises 669 residues: DNA ligase (669 aa).

NAD(+) contacts are provided by residues 34–38 (DAEYD), 83–84 (SL), and Glu-114. Lys-116 acts as the N6-AMP-lysine intermediate in catalysis. Residues Arg-137, Glu-171, Lys-287, and Lys-311 each contribute to the NAD(+) site. Positions 405, 408, 423, and 428 each coordinate Zn(2+). The region spanning 591–669 (NVESYFAGKT…EERFLQELNK (79 aa)) is the BRCT domain.

This sequence belongs to the NAD-dependent DNA ligase family. LigA subfamily. The cofactor is Mg(2+). Mn(2+) serves as cofactor.

It carries out the reaction NAD(+) + (deoxyribonucleotide)n-3'-hydroxyl + 5'-phospho-(deoxyribonucleotide)m = (deoxyribonucleotide)n+m + AMP + beta-nicotinamide D-nucleotide.. Functionally, DNA ligase that catalyzes the formation of phosphodiester linkages between 5'-phosphoryl and 3'-hydroxyl groups in double-stranded DNA using NAD as a coenzyme and as the energy source for the reaction. It is essential for DNA replication and repair of damaged DNA. The sequence is that of DNA ligase from Bacillus anthracis (strain A0248).